A 274-amino-acid polypeptide reads, in one-letter code: 2,3,4,5-tetrahydropyridine-2,6-dicarboxylate N-succinyltransferase (274 aa).

Arg106 and Asp143 together coordinate substrate.

The protein belongs to the transferase hexapeptide repeat family. As to quaternary structure, homotrimer.

The protein resides in the cytoplasm. It carries out the reaction (S)-2,3,4,5-tetrahydrodipicolinate + succinyl-CoA + H2O = (S)-2-succinylamino-6-oxoheptanedioate + CoA. It participates in amino-acid biosynthesis; L-lysine biosynthesis via DAP pathway; LL-2,6-diaminopimelate from (S)-tetrahydrodipicolinate (succinylase route): step 1/3. The chain is 2,3,4,5-tetrahydropyridine-2,6-dicarboxylate N-succinyltransferase from Rickettsia akari (strain Hartford).